An 891-amino-acid polypeptide reads, in one-letter code: Transportin-1 (891 aa).

19 HEAT repeats span residues 14-40 (GLREICTLLDAHISPNSDQARIWQQLQ), 45-83 (FPDFNNYLVFLLARGEGKSFEARQAAGLLLKNNLRATFS), 92-125 (YVKSELLPCIGATNKAIRSTVGTVISVLFQIVRV), 131-168 (LFQALHQCLDSNDLDHMEGAMDAIYKICEDVPEELDVD), 178-208 (NVFMPRLLQFFQSTHAILRKLALGCINQYIV), 221-248 (YLQGLFNLAKDPSADVRKLVCSAWVQLI), 260-287 (KNVTELMLQANKDSDDEVALEACEFWSA), 303-381 (PRLI…LSNV), 389-420 (TLMPLIQQNLARTDDDAWKEREAAVLSIGAIA), 432-459 (PQIVAFLIPLLDDKFPLIRSITCWTLSR), 477-510 (FDKILLGLLRRVLDTNKRVQEAACSAFATLEEEA), 518-551 (LGIILQHLMCAYGKYQRRNLRILYDALGTLADAV), 559-597 (KYLDIFMPPLITKWQQLANSDKDLFPLLECFTSIAQALG), 605-653 (EPVF…GLGA), 664-695 (LRDILLQCCMDEAADVRQSALALLGDLSRVCP), 703-740 (QEFLNVAAKQLNPQCVKEAVSVANNACWAIGELAIKIG), 748-784 (ITVVSCLVPILKSPEGLNKSLLENSAITLGRLCWVCP), 792-825 (DHFMQAWCNALCMIRDDFEKEDAFHGLCAMVAAN), and 834-866 (TFICQACASWNEIKSEGLHNEVCQILNGYKQML). In terms of domain architecture, Importin N-terminal spans 35 to 103 (IWQQLQHYSQ…KSELLPCIGA (69 aa)). A compositionally biased stretch (acidic residues) spans 317–330 (DDDESLADAEEDES). Residues 317–337 (DDDESLADAEEDESFPDRDQD) form a disordered region.

Belongs to the importin beta family. Importin beta-2 subfamily.

The protein resides in the cytoplasm. It localises to the nucleus. It is found in the nucleoplasm. Functions in nuclear protein import as nuclear transport receptor. Serves as receptor for nuclear localization signals (NLS) in cargo substrates. Is thought to mediate docking of the importin/substrate complex to the nuclear pore complex (NPC) through binding to nucleoporin and the complex is subsequently translocated through the pore by an energy requiring, Ran-dependent mechanism. At the nucleoplasmic side of the NPC, Ran binds to the importin, the importin/substrate complex dissociates and importin is re-exported from the nucleus to the cytoplasm where GTP hydrolysis releases Ran. The directionality of nuclear import is thought to be conferred by an asymmetric distribution of the GTP- and GDP-bound forms of Ran between the cytoplasm and nucleus. In Oryza sativa subsp. japonica (Rice), this protein is Transportin-1 (TRN1).